The sequence spans 243 residues: Protein canopy homolog 3 (243 aa).

Residues 1-15 (MWFLFLLLPLWAGCA) form the signal peptide. The 210-residue stretch at 27–236 (SKCEVCKYVA…KEEKKQMDQP (210 aa)) folds into the Saposin B-type domain. 3 disulfides stabilise this stretch: C29–C188, C32–C176, and C86–C148. A coiled-coil region spans residues 136-160 (ETSAEVADMKKQCDVMMENYEEVIE). Residues 186–243 (QSCLSEQGDSRKGDTGPSTGTKKQKKQGEKKNKSKKQNSGSKEEKKQMDQPMAAKEEL) are disordered. Basic and acidic residues predominate over residues 226-243 (SKEEKKQMDQPMAAKEEL).

It belongs to the canopy family.

It localises to the endoplasmic reticulum. Toll-like receptor (TLR)-specific co-chaperone for HSP90B1. Required for proper TLR folding and hence controls TLR exit from the endoplasmic reticulum. Consequently, required for immune responses. This is Protein canopy homolog 3 (cnpy3) from Xenopus laevis (African clawed frog).